Consider the following 32-residue polypeptide: Cytochrome b6-f complex subunit 8 (32 aa).

The helical transmembrane segment at 6 to 26 (IVGITWAALMVVFTFSLSLVV) threads the bilayer.

Belongs to the PetN family. As to quaternary structure, the 4 large subunits of the cytochrome b6-f complex are cytochrome b6, subunit IV (17 kDa polypeptide, PetD), cytochrome f and the Rieske protein, while the 4 small subunits are PetG, PetL, PetM and PetN. The complex functions as a dimer.

It localises to the plastid. Its subcellular location is the chloroplast thylakoid membrane. In terms of biological role, component of the cytochrome b6-f complex, which mediates electron transfer between photosystem II (PSII) and photosystem I (PSI), cyclic electron flow around PSI, and state transitions. In Pinus koraiensis (Korean pine), this protein is Cytochrome b6-f complex subunit 8.